We begin with the raw amino-acid sequence, 2828 residues long: Matrix-remodeling-associated protein 5 (2828 aa).

The N-terminal stretch at 1-26 (MPKRAHWGALSVVLILLWGHPRVALA) is a signal peptide. The LRRNT domain maps to 27 to 55 (CPHPCACYVPSEVHCTFRSLASVPAGIAK). LRR repeat units follow at residues 56–77 (HVER…SFAG), 80–101 (KLEL…ALRD), 104–125 (SLQV…TLQG), 128–149 (NLMR…AFNG), 152–173 (SLRL…TFST), and 184–205 (TIRH…MLRN). In terms of domain architecture, LRRCT spans 217–277 (NPWTCDCEMR…HKLKDMTCLK (61 aa)). N-linked (GlcNAc...) asparagine glycans are attached at residues Asn-287 and Asn-321. 2 Ig-like C2-type domains span residues 481-571 (PSGA…YRVL) and 575-669 (PSTQ…ITVT). 2 disulfides stabilise this stretch: Cys-501–Cys-555 and Cys-599–Cys-651. An N-linked (GlcNAc...) asparagine glycan is attached at Asn-633. Disordered regions lie at residues 671-715 (KGSG…RRLL), 933-962 (KPTH…EYEP), 1068-1190 (QGGN…APDI), 1204-1275 (AWVD…SSET), and 1367-1389 (EESS…AQPG). Acidic residues predominate over residues 695–708 (IVEDEGGSGMGDEE). Ser-702 carries an O-linked (Xyl...) (chondroitin sulfate) serine glycan. The segment covering 951–962 (SSPEPTSSEYEP) has biased composition (low complexity). Positions 1090–1107 (SKSITLPDSTLGIMSSMS) are enriched in polar residues. Positions 1146–1168 (PSRRRPNGRRRLRPNKFRHRHKQ) are enriched in basic residues. 2 stretches are compositionally biased toward polar residues: residues 1169 to 1190 (TPPT…APDI) and 1204 to 1214 (AWVDNTVNTPK). Residues 1229–1243 (TPRRKHGKRPNKHRY) show a composition bias toward basic residues. Asn-1403 carries an N-linked (GlcNAc...) asparagine glycan. The stretch at 1410–1434 (LKELEDVDFTSEFLSSLTVSTPFHQ) is one LRR 7 repeat. 5 disordered regions span residues 1479-1499 (QNHT…PSTI), 1536-1566 (NPET…SDQD), 1579-1603 (QVFG…HASH), 1669-1689 (STTI…KFTD), and 1700-1719 (KVFG…KPPS). Over residues 1542–1566 (TPVNNEGTQHMSGPNELSTPSSDQD) the composition is skewed to polar residues. A glycan (N-linked (GlcNAc...) asparagine) is linked at Asn-1735. 10 Ig-like C2-type domains span residues 1853–1946 (PQIL…LSVT), 1950–2041 (PQIL…IRLH), 2046–2140 (PPVI…LNVQ), 2146–2239 (ARIT…VDVV), 2242–2343 (PAKI…KVVT), 2345–2432 (PATI…KTVW), 2440–2534 (PKIN…LQLT), 2542–2630 (PIFH…RLVS), 2637–2722 (PEAN…PSVT), and 2733–2828 (PRIT…IHVF). 2 disulfides stabilise this stretch: Cys-1875-Cys-1928 and Cys-1972-Cys-2025. 2 N-linked (GlcNAc...) asparagine glycosylation sites follow: Asn-2007 and Asn-2056. Intrachain disulfides connect Cys-2069–Cys-2122, Cys-2168–Cys-2221, Cys-2265–Cys-2324, Cys-2368–Cys-2418, Cys-2466–Cys-2518, Cys-2564–Cys-2616, Cys-2659–Cys-2711, and Cys-2755–Cys-2810. Asn-2693 is a glycosylation site (N-linked (GlcNAc...) asparagine).

Detected in placenta (at protein level). Detected in cerebrospinal fluid and fibroblasts (at protein level). Highly expressed in kidney, also detected on liver and spleen. Expressed by proximal tubular cells of the kidney (at protein level). Expression highly increases during chronic kidney disease and autosomal dominant polycystic kidney disease, where is detected in cysts.

Its subcellular location is the secreted. In kidney, has anti-inflammatory and anti-fibrotic properties by limiting the induction of chemokines, fibronectin and collagen expression in response to TGB1 and pro-inflammatory stimuli. The chain is Matrix-remodeling-associated protein 5 (MXRA5) from Homo sapiens (Human).